Reading from the N-terminus, the 75-residue chain is MARYFRRRKFCRFTAEDVIEIDYKDIATLKNYITESGKIVPSRITGTRAKYQRQLARAIKRARYLSLLPYTDLHQ.

This sequence belongs to the bacterial ribosomal protein bS18 family. In terms of assembly, part of the 30S ribosomal subunit. Forms a tight heterodimer with protein bS6.

Its function is as follows. Binds as a heterodimer with protein bS6 to the central domain of the 16S rRNA, where it helps stabilize the platform of the 30S subunit. This is Small ribosomal subunit protein bS18 from Baumannia cicadellinicola subsp. Homalodisca coagulata.